A 419-amino-acid chain; its full sequence is Vascular endothelial growth factor C (419 aa).

The first 31 residues, 1-31 (MHLLGFFSVACSLLAAALLPGPREAPAAAAA), serve as a signal peptide directing secretion. Residues 32–111 (FESGLDLSDA…RTEETIKFAA (80 aa)) constitute a propeptide, or 102. 3 disulfide bridges follow: C131-C173, C162-C209, and C166-C211. N-linked (GlcNAc...) asparagine glycosylation is found at N175, N205, and N240. Residues 228 to 419 (SLPATLPQCQ…PSYWKRPQMS (192 aa)) constitute a propeptide that is removed on maturation. 4 repeat units span residues 280–295 (CGPNKELDEETCQCVC), 304–319 (CGPHKELDRNSCQCVC), 328–343 (CGANREFDENTCQCVC), and 347–362 (CPRNQPLNPGKCACEC). Residues 280–362 (CGPNKELDEE…LNPGKCACEC (83 aa)) are 4 X 16 AA repeats of C-X(10)-C-X-C-X(1,3)-C.

Belongs to the PDGF/VEGF growth factor family. In terms of assembly, homodimer; non-covalent and antiparallel. Interacts with FLT4/VEGFR3; the interaction is required for FLT4/VEGFR3 homodimarization and activation. In terms of processing, undergoes a complex proteolytic maturation which generates a variety of processed secreted forms with increased activity toward VEGFR-3, but only the fully processed form could activate VEGFR-2. VEGF-C first form an antiparallel homodimer linked by disulfide bonds. Before secretion, a cleavage occurs between Arg-227 and Ser-228 producing a heterotetramer. The next extracellular step of the processing removes the N-terminal propeptide. Finally the mature VEGF-C is composed mostly of two VEGF homology domains (VHDs) bound by non-covalent interactions. In terms of tissue distribution, expressed in the spleen. Expressed in the lymph node, thymus, appendix and bone marrow. Expressed in the heart, placenta, skeletal muscle, ovary and small intestine. Expressed in the prostate, testis and colon.

The protein localises to the secreted. In terms of biological role, growth factor active in angiogenesis, and endothelial cell growth, stimulating their proliferation and migration and also has effects on the permeability of blood vessels. May function in angiogenesis of the venous and lymphatic vascular systems during embryogenesis, and also in the maintenance of differentiated lymphatic endothelium in adults. Binds and activates KDR/VEGFR2 and FLT4/VEGFR3 receptors. This is Vascular endothelial growth factor C (VEGFC) from Homo sapiens (Human).